The primary structure comprises 262 residues: ATP synthase subunit a (262 aa).

Transmembrane regions (helical) follow at residues 24 to 44, 84 to 104, 129 to 149, 194 to 214, and 228 to 248; these read AVHL…LFVF, VIAP…AIDL, DISA…FYTV, LFGN…MYMA, and LVWA…FMML.

Belongs to the ATPase A chain family. F-type ATPases have 2 components, CF(1) - the catalytic core - and CF(0) - the membrane proton channel. CF(1) has five subunits: alpha(3), beta(3), gamma(1), delta(1), epsilon(1). CF(0) has three main subunits: a(1), b(2) and c(9-12). The alpha and beta chains form an alternating ring which encloses part of the gamma chain. CF(1) is attached to CF(0) by a central stalk formed by the gamma and epsilon chains, while a peripheral stalk is formed by the delta and b chains.

It localises to the cell inner membrane. Its function is as follows. Key component of the proton channel; it plays a direct role in the translocation of protons across the membrane. The polypeptide is ATP synthase subunit a (Actinobacillus pleuropneumoniae serotype 3 (strain JL03)).